A 492-amino-acid chain; its full sequence is Pyrin and HIN domain-containing protein 1 (492 aa).

Positions 1 to 88 constitute a Pyrin domain; it reads MANNYKKIVL…AETLKREKLK (88 aa). Disordered stretches follow at residues 106-199 and 400-492; these read KTKQ…KPLA and KNTN…PAVP. Positions 142–159 are enriched in basic and acidic residues; sequence PSEEETGTKRSKMSKEQT. Residues 160 to 173 show a composition bias toward polar residues; the sequence is RPSCSAGASTSTAM. The segment covering 181 to 194 has biased composition (low complexity); that stretch reads TSSSAPPNTSSTES. Residues 199–399 form the HIN-200 domain; it reads ANRHATASKN…SEMHSFIQIQ (201 aa). 2 stretches are compositionally biased toward polar residues: residues 416 to 432 and 460 to 492; these read QEQSQHPKPSEASTTLP and GAQSSPANFRITSPTVAPPLSSDTSTNRHPAVP.

Belongs to the HIN-200 family. As to quaternary structure, interacts with MDM2. In terms of tissue distribution, expressed in spleen, lymph node and peripheral blood leukocytes, and at lower levels in thymus, bone marrow and fetal liver. Down-regulated in breast tumors.

Its subcellular location is the nucleus. The protein resides in the nucleoplasm. It is found in the nucleus speckle. Functionally, major mediator of the tumor suppressor activity of IFN in breast cancer cells. Promotes ubiquitination and subsequent degradation of MDM2, which leads to p53/TP53 stabilization. Promotes ubiquitination and subsequent degradation of HDAC1, which in turn enhances maspin expression, and impairs invasive activity of cancer cells. The polypeptide is Pyrin and HIN domain-containing protein 1 (PYHIN1) (Homo sapiens (Human)).